A 432-amino-acid polypeptide reads, in one-letter code: GTPase Obg (432 aa).

Residues 1 to 158 form the Obg domain; sequence MFVDQVKIYV…RNIILELKLL (158 aa). An OBG-type G domain is found at 159-329; it reads ADVGLVGFPS…LLFAIADLLE (171 aa). GTP contacts are provided by residues 165-172, 190-194, 212-215, 282-285, and 310-312; these read GFPSVGKS, FTTLV, DLPG, NKMD, and SAA. Residues S172 and T192 each coordinate Mg(2+). The region spanning 350-428 is the OCT domain; the sequence is KYEKEEPPFT…LLDYEFEFVD (79 aa).

It belongs to the TRAFAC class OBG-HflX-like GTPase superfamily. OBG GTPase family. Monomer. Mg(2+) is required as a cofactor.

It localises to the cytoplasm. Its function is as follows. An essential GTPase which binds GTP, GDP and possibly (p)ppGpp with moderate affinity, with high nucleotide exchange rates and a fairly low GTP hydrolysis rate. Plays a role in control of the cell cycle, stress response, ribosome biogenesis and in those bacteria that undergo differentiation, in morphogenesis control. The polypeptide is GTPase Obg (Geobacillus kaustophilus (strain HTA426)).